We begin with the raw amino-acid sequence, 263 residues long: Protein PUN1 (263 aa).

The Cytoplasmic portion of the chain corresponds to methionine 1 to threonine 6. The chain crosses the membrane as a helical span at residues leucine 7–glycine 27. The Extracellular segment spans residues serine 28–cysteine 143. Asparagine 100 carries N-linked (GlcNAc...) asparagine glycosylation. A helical transmembrane segment spans residues methionine 144 to leucine 164. Over arginine 165–proline 172 the chain is Cytoplasmic. A helical transmembrane segment spans residues leucine 173–glycine 193. The Extracellular segment spans residues serine 194–tyrosine 223. N-linked (GlcNAc...) asparagine glycosylation occurs at asparagine 209. A helical transmembrane segment spans residues glutamine 224–valine 244. Over arginine 245–isoleucine 263 the chain is Cytoplasmic. Lysine 260 is covalently cross-linked (Glycyl lysine isopeptide (Lys-Gly) (interchain with G-Cter in ubiquitin)).

It belongs to the SUR7 family. N-glycosylated.

Its subcellular location is the cell membrane. Its function is as follows. Contributes to the wild-type cellular response to nitrogen stress through signaling pathways that regulate the expression of genes involved in amino acid biosynthesis. Required for wild-type filamentous growth, cell growth, and cell-cell adhesion. The protein is Protein PUN1 (PUN1) of Saccharomyces cerevisiae (strain ATCC 204508 / S288c) (Baker's yeast).